A 602-amino-acid polypeptide reads, in one-letter code: Sulfite reductase [NADPH] flavoprotein alpha-component (602 aa).

The Flavodoxin-like domain maps to 68 to 206 (ITIISASQTG…NYIQWSEELL (139 aa)). FMN is bound by residues 74–79 (SQTGNA), 121–124 (STQG), and 157–166 (LGDVSYNLFC). One can recognise an FAD-binding FR-type domain in the interval 237–451 (YKPAVATVLL…VEEKSNFRLP (215 aa)). FAD contacts are provided by residues threonine 325, lysine 359, 389–392 (RLYS), 407–409 (TVG), and 422–425 (GGSS). Residues 522-523 (SR), 528-532 (KIYVQ), and aspartate 564 each bind NADP(+). Residue tyrosine 602 participates in FAD binding.

Belongs to the NADPH-dependent sulphite reductase flavoprotein subunit CysJ family. It in the N-terminal section; belongs to the flavodoxin family. This sequence in the C-terminal section; belongs to the flavoprotein pyridine nucleotide cytochrome reductase family. In terms of assembly, alpha(8)-beta(8). The alpha component is a flavoprotein, the beta component is a hemoprotein. Requires FAD as cofactor. It depends on FMN as a cofactor.

The enzyme catalyses hydrogen sulfide + 3 NADP(+) + 3 H2O = sulfite + 3 NADPH + 4 H(+). The protein operates within sulfur metabolism; hydrogen sulfide biosynthesis; hydrogen sulfide from sulfite (NADPH route): step 1/1. Its function is as follows. Component of the sulfite reductase complex that catalyzes the 6-electron reduction of sulfite to sulfide. This is one of several activities required for the biosynthesis of L-cysteine from sulfate. The flavoprotein component catalyzes the electron flow from NADPH -&gt; FAD -&gt; FMN to the hemoprotein component. This is Sulfite reductase [NADPH] flavoprotein alpha-component from Buchnera aphidicola subsp. Schizaphis graminum (strain Sg).